The sequence spans 89 residues: Small ribosomal subunit protein uS15 (89 aa).

This sequence belongs to the universal ribosomal protein uS15 family. As to quaternary structure, part of the 30S ribosomal subunit. Forms a bridge to the 50S subunit in the 70S ribosome, contacting the 23S rRNA.

In terms of biological role, one of the primary rRNA binding proteins, it binds directly to 16S rRNA where it helps nucleate assembly of the platform of the 30S subunit by binding and bridging several RNA helices of the 16S rRNA. Functionally, forms an intersubunit bridge (bridge B4) with the 23S rRNA of the 50S subunit in the ribosome. This is Small ribosomal subunit protein uS15 from Granulibacter bethesdensis (strain ATCC BAA-1260 / CGDNIH1).